The sequence spans 640 residues: Threonine--tRNA ligase (640 aa).

One can recognise a TGS domain in the interval 1-61; that stretch reads MPIITLPNGD…TEDSTLQIIT (61 aa). A catalytic region spans residues 242–533; the sequence is DHRKIGKALD…LIEHYAGFMP (292 aa). 3 residues coordinate Zn(2+): C333, H384, and H510.

The protein belongs to the class-II aminoacyl-tRNA synthetase family. In terms of assembly, homodimer. Zn(2+) serves as cofactor.

The protein resides in the cytoplasm. It catalyses the reaction tRNA(Thr) + L-threonine + ATP = L-threonyl-tRNA(Thr) + AMP + diphosphate + H(+). In terms of biological role, catalyzes the attachment of threonine to tRNA(Thr) in a two-step reaction: L-threonine is first activated by ATP to form Thr-AMP and then transferred to the acceptor end of tRNA(Thr). Also edits incorrectly charged L-seryl-tRNA(Thr). In Acinetobacter baumannii (strain AB0057), this protein is Threonine--tRNA ligase.